Consider the following 80-residue polypeptide: Mu-conotoxin BuIIIC (80 aa).

Residues 1–22 form the signal peptide; sequence MMSKLGVLLTICLLLFPLFALP. Residues 23–51 constitute a propeptide that is removed on maturation; sequence QDGDQPADRPAERMQDDLSSEQHPLFEKR. 3 cysteine pairs are disulfide-bonded: Cys56/Cys70, Cys57/Cys76, and Cys66/Cys77. A Cysteine amide modification is found at Cys77.

Belongs to the conotoxin M superfamily. As to expression, expressed by the venom duct.

Its subcellular location is the secreted. In terms of biological role, mu-conotoxins block voltage-gated sodium channels. Extremely potent inhibitor of Nav1.4/SCN4A (96% inhibition at 1 uM). The inhibition is very slowly reversible. In Conus bullatus (Bubble cone), this protein is Mu-conotoxin BuIIIC.